Reading from the N-terminus, the 498-residue chain is Protein DETOXIFICATION 30 (498 aa).

Helical transmembrane passes span 64-86 (YSLG…AAVS), 91-111 (VIAG…ETLC), 136-156 (VTAV…AFIG), 161-181 (ISSA…AYAV), 197-217 (VMAA…WFVI), 227-247 (LAVV…VYIF), 277-297 (AVML…AGYL), 302-322 (ISVA…MIAI), 349-369 (LVAV…LLIF), 393-413 (ILAV…VAVG), 419-439 (VVAY…GLLL), and 447-467 (VMGI…VLTW).

This sequence belongs to the multi antimicrobial extrusion (MATE) (TC 2.A.66.1) family.

The protein localises to the membrane. The sequence is that of Protein DETOXIFICATION 30 from Arabidopsis thaliana (Mouse-ear cress).